A 701-amino-acid chain; its full sequence is C6 finger domain transcription factor nscR (701 aa).

The zn(2)-C6 fungal-type DNA-binding region spans 17–43 (CELCRERKVKCDKLDPCTNCASAGVVC).

It is found in the nucleus. In terms of biological role, transcription factor that specifically regulates the neosartoricin B biosynthesis gene cluster. The chain is C6 finger domain transcription factor nscR from Arthroderma gypseum (strain ATCC MYA-4604 / CBS 118893) (Microsporum gypseum).